The sequence spans 294 residues: 4-hydroxy-tetrahydrodipicolinate synthase (294 aa).

Residue threonine 45 coordinates pyruvate. The Proton donor/acceptor role is filled by tyrosine 133. Lysine 161 (schiff-base intermediate with substrate) is an active-site residue. Isoleucine 203 provides a ligand contact to pyruvate.

This sequence belongs to the DapA family. As to quaternary structure, homotetramer; dimer of dimers.

Its subcellular location is the cytoplasm. It catalyses the reaction L-aspartate 4-semialdehyde + pyruvate = (2S,4S)-4-hydroxy-2,3,4,5-tetrahydrodipicolinate + H2O + H(+). It participates in amino-acid biosynthesis; L-lysine biosynthesis via DAP pathway; (S)-tetrahydrodipicolinate from L-aspartate: step 3/4. Catalyzes the condensation of (S)-aspartate-beta-semialdehyde [(S)-ASA] and pyruvate to 4-hydroxy-tetrahydrodipicolinate (HTPA). This chain is 4-hydroxy-tetrahydrodipicolinate synthase, found in Alcanivorax borkumensis (strain ATCC 700651 / DSM 11573 / NCIMB 13689 / SK2).